A 152-amino-acid chain; its full sequence is Protein SprT-like (152 aa).

The 142-residue stretch at 7 to 148 (QRLVEEVSLQ…GKCKGKLILI (142 aa)) folds into the SprT-like domain. Position 67 (His-67) interacts with Zn(2+). Glu-68 is a catalytic residue. His-71 is a Zn(2+) binding site.

This sequence belongs to the SprT family. The cofactor is Zn(2+).

It is found in the cytoplasm. The polypeptide is Protein SprT-like (Bacillus cereus (strain AH187)).